We begin with the raw amino-acid sequence, 314 residues long: Ribonuclease Z (314 aa).

Positions 60, 62, 64, 65, 140, 209, and 269 each coordinate Zn(2+). Aspartate 64 acts as the Proton acceptor in catalysis.

This sequence belongs to the RNase Z family. In terms of assembly, homodimer. Zn(2+) is required as a cofactor.

It catalyses the reaction Endonucleolytic cleavage of RNA, removing extra 3' nucleotides from tRNA precursor, generating 3' termini of tRNAs. A 3'-hydroxy group is left at the tRNA terminus and a 5'-phosphoryl group is left at the trailer molecule.. Functionally, zinc phosphodiesterase, which displays some tRNA 3'-processing endonuclease activity. Probably involved in tRNA maturation, by removing a 3'-trailer from precursor tRNA. The protein is Ribonuclease Z of Methanococcus maripaludis (strain C5 / ATCC BAA-1333).